Here is a 409-residue protein sequence, read N- to C-terminus: ATPase ASNA1 homolog (409 aa).

Lys21 to Thr28 provides a ligand contact to ATP. Residue Asp62 is part of the active site. Glu303 and Asn330 together coordinate ATP. 2 residues coordinate Zn(2+): Cys342 and Cys345.

It belongs to the arsA ATPase family. In terms of assembly, homodimer.

It localises to the cytoplasm. The protein localises to the endoplasmic reticulum. ATPase required for the post-translational delivery of tail-anchored (TA) proteins to the endoplasmic reticulum. Recognizes and selectively binds the transmembrane domain of TA proteins in the cytosol. This complex then targets to the endoplasmic reticulum by membrane-bound receptors, where the tail-anchored protein is released for insertion. This process is regulated by ATP binding and hydrolysis. ATP binding drives the homodimer towards the closed dimer state, facilitating recognition of newly synthesized TA membrane proteins. ATP hydrolysis is required for insertion. Subsequently, the homodimer reverts towards the open dimer state, lowering its affinity for the membrane-bound receptor, and returning it to the cytosol to initiate a new round of targeting. This is ATPase ASNA1 homolog from Leishmania major.